The sequence spans 801 residues: MIKTILIKLILLVIFCYHFLFAEEDVISTPPGYYDLIRHKRDPPITEYQSSQDTDLYYPDVCRNALRPLDYPWINEFAPIFFPGFNMGGFNSIFIPKNRSMIFRTPFQDSLVTLHVVCIEGTFIVEGNRFLFANTIIVLPGGRFESTTGIEFYDENDSGVSFYPDLPKDPSGFFPGILVLGGSISVVGKEPIVYRASRINDSSIEISPPVPEIIISPNPWDRVYKLVKIFTELYPLGFYCRYNTDEVGKILSLSSYLLYPFPPVSENDKIIRVLVETDRQQTVIPTNIYKREYATKGSIYITGGSNAYFKNIFFKNLGFTKNEPYNDTKLIFSPNDTNVVTDIIMGTNQKFRSSLYIESSKNVTIEGCAFVENDLTRSPLVFFDSNVKISNSLISSKSGSNIIALHGTDSIQSSNNSYLLEKIDLASWDVERNNNIDCGNQGNGIFSISPNINSNGDYFSGQQTAFNYYFIPNNSVNSNQDNSSLNSRPIEIIIKDSMFNPTASNGSLNKYFLNINTDGNKTISTYFTVRDLKTSHAINMNLNNSAIAFYNLKGGEGFKMEGNVERLDIIGSIINSNGSIKNISTSTTNIIDSYIYSSSSDIQPFNNQIYGSLITPYYYSDSNTLDKFEIKSILPNAPIQIVSGSLFNVSVQIQTLSSSVSIDNISCIFTSSVINTTVVQVNSNYSCILPLNITNEEGPLNLRVTLVNNTSPSSVSSDNYLYIIDFPEITVFNTYEFYSGWLMDNSNSSQQISFGGNSFKNGCNKVDSNCTISQNSKYSTVFSQLSITLPSNFKTKTHWMK.

An N-terminal signal peptide occupies residues 1-22; it reads MIKTILIKLILLVIFCYHFLFA.

The protein belongs to the GDT family.

It is found in the secreted. The sequence is that of Growth-differentiation transition protein 7 (gdt7) from Dictyostelium discoideum (Social amoeba).